We begin with the raw amino-acid sequence, 187 residues long: DNA-3-methyladenine glycosylase 1 (187 aa).

4 residues coordinate Zn(2+): C4, H17, H175, and C179.

The catalysed reaction is Hydrolysis of alkylated DNA, releasing 3-methyladenine.. Activity is controlled by product inhibition. In terms of biological role, hydrolysis of the deoxyribose N-glycosidic bond to excise 3-methyladenine from the damaged DNA polymer formed by alkylation lesions. The polypeptide is DNA-3-methyladenine glycosylase 1 (Escherichia coli (strain K12)).